The following is a 152-amino-acid chain: Deoxyuridine 5'-triphosphate nucleotidohydrolase (152 aa).

Substrate is bound by residues 72 to 74, N85, and 89 to 91; these read RSG and TID.

The protein belongs to the dUTPase family. Mg(2+) serves as cofactor.

The enzyme catalyses dUTP + H2O = dUMP + diphosphate + H(+). It participates in pyrimidine metabolism; dUMP biosynthesis; dUMP from dCTP (dUTP route): step 2/2. This enzyme is involved in nucleotide metabolism: it produces dUMP, the immediate precursor of thymidine nucleotides and it decreases the intracellular concentration of dUTP so that uracil cannot be incorporated into DNA. This Bradyrhizobium sp. (strain ORS 278) protein is Deoxyuridine 5'-triphosphate nucleotidohydrolase.